A 154-amino-acid polypeptide reads, in one-letter code: D-aminoacyl-tRNA deacylase (154 aa).

A Gly-cisPro motif, important for rejection of L-amino acids motif is present at residues 142–143 (GP).

Belongs to the DTD family. Homodimer.

It is found in the cytoplasm. The catalysed reaction is glycyl-tRNA(Ala) + H2O = tRNA(Ala) + glycine + H(+). The enzyme catalyses a D-aminoacyl-tRNA + H2O = a tRNA + a D-alpha-amino acid + H(+). In terms of biological role, an aminoacyl-tRNA editing enzyme that deacylates mischarged D-aminoacyl-tRNAs. Also deacylates mischarged glycyl-tRNA(Ala), protecting cells against glycine mischarging by AlaRS. Acts via tRNA-based rather than protein-based catalysis; rejects L-amino acids rather than detecting D-amino acids in the active site. By recycling D-aminoacyl-tRNA to D-amino acids and free tRNA molecules, this enzyme counteracts the toxicity associated with the formation of D-aminoacyl-tRNA entities in vivo and helps enforce protein L-homochirality. In Acidovorax sp. (strain JS42), this protein is D-aminoacyl-tRNA deacylase.